We begin with the raw amino-acid sequence, 106 residues long: uncharacterized protein (106 aa).

An N-terminal signal peptide occupies residues 1-31 (MKKKTKIILSLLAALIVILIVLPVLSPVVFT).

This is an uncharacterized protein from Bacillus subtilis (strain 168).